The sequence spans 316 residues: Galectin-8 (316 aa).

Galectin domains are found at residues 18-151 (YVST…IGFR) and 186-316 (FEAR…VRSW). A carbohydrate contacts are provided by Arg68, Asn78, and Glu88. 248–254 (WGEEERN) serves as a coordination point for a beta-D-galactoside.

Homodimer. Interacts with CALCOCO2/NDP52. Interacts with PDPN; the interaction is glycosylation-dependent; may participate in connection of the lymphatic endothelium to the surrounding extracellular matrix. In terms of tissue distribution, expressed in liver, kidney, cardiac muscle, lung, and brain.

It is found in the cytoplasmic vesicle. The protein resides in the cytoplasm. The protein localises to the cytosol. Functionally, beta-galactoside-binding lectin that acts as a sensor of membrane damage caused by infection and restricts the proliferation of infecting pathogens by targeting them for autophagy. Detects membrane rupture by binding beta-galactoside ligands located on the lumenal side of the endosome membrane; these ligands becoming exposed to the cytoplasm following rupture. Restricts infection by initiating autophagy via interaction with CALCOCO2/NDP52. Required to restrict infection of bacterial invasion such as S.typhimurium. Also required to restrict infection of Picornaviridae viruses. Has a marked preference for 3'-O-sialylated and 3'-O-sulfated glycans. The sequence is that of Galectin-8 (Lgals8) from Rattus norvegicus (Rat).